Consider the following 481-residue polypeptide: ATP synthase subunit beta (481 aa).

Residue 167-174 (GGAGVGKT) participates in ATP binding.

Belongs to the ATPase alpha/beta chains family. In terms of assembly, F-type ATPases have 2 components, CF(1) - the catalytic core - and CF(0) - the membrane proton channel. CF(1) has five subunits: alpha(3), beta(3), gamma(1), delta(1), epsilon(1). CF(0) has three main subunits: a(1), b(2) and c(9-12). The alpha and beta chains form an alternating ring which encloses part of the gamma chain. CF(1) is attached to CF(0) by a central stalk formed by the gamma and epsilon chains, while a peripheral stalk is formed by the delta and b chains.

Its subcellular location is the cell membrane. The enzyme catalyses ATP + H2O + 4 H(+)(in) = ADP + phosphate + 5 H(+)(out). Functionally, produces ATP from ADP in the presence of a proton gradient across the membrane. The catalytic sites are hosted primarily by the beta subunits. This is ATP synthase subunit beta from Corynebacterium efficiens (strain DSM 44549 / YS-314 / AJ 12310 / JCM 11189 / NBRC 100395).